The chain runs to 485 residues: Arginine/agmatine antiporter (485 aa).

12 helical membrane-spanning segments follow: residues 12–34 (GTIA…SLPQ), 38–60 (ATAG…FFIA), 89–111 (IGFT…YAVI), 126–148 (GGNT…FIVL), 155–177 (SIIN…ILTA), 211–230 (TMLV…VMSG), 243–265 (VLGF…GSLF), 291–313 (VLMN…IIVA), 363–385 (WNTM…AAFL), 400–422 (IKAP…LIYA), 427–446 (YLFM…IDAG), and 461–483 (IVGM…TGRI).

This sequence belongs to the amino acid-polyamine-organocation (APC) superfamily. Basic amino acid/polyamine antiporter (APA) (TC 2.A.3.2) family.

It is found in the cell inner membrane. In terms of biological role, catalyzes the exchange of L-arginine for agmatine. The arginine uptake by the bacterium in the macrophage may be a virulence factor against the host innate immune response. This chain is Arginine/agmatine antiporter (aaxC), found in Chlamydia pneumoniae (Chlamydophila pneumoniae).